We begin with the raw amino-acid sequence, 96 residues long: uncharacterized protein (96 aa).

The helical transmembrane segment at 53–71 threads the bilayer; that stretch reads VLLMPLLQSFVLSLALMGV.

It localises to the membrane. This is an uncharacterized protein from Saccharomyces cerevisiae (strain ATCC 204508 / S288c) (Baker's yeast).